A 223-amino-acid chain; its full sequence is Phosphoribosylformylglycinamidine synthase subunit PurQ (223 aa).

One can recognise a Glutamine amidotransferase type-1 domain in the interval 3–223 (FAVLVFPGSN…MVKSWREQHV (221 aa)). Cys-85 acts as the Nucleophile in catalysis. Residues His-193 and Glu-195 contribute to the active site.

Part of the FGAM synthase complex composed of 1 PurL, 1 PurQ and 2 PurS subunits.

It is found in the cytoplasm. It carries out the reaction N(2)-formyl-N(1)-(5-phospho-beta-D-ribosyl)glycinamide + L-glutamine + ATP + H2O = 2-formamido-N(1)-(5-O-phospho-beta-D-ribosyl)acetamidine + L-glutamate + ADP + phosphate + H(+). The enzyme catalyses L-glutamine + H2O = L-glutamate + NH4(+). The protein operates within purine metabolism; IMP biosynthesis via de novo pathway; 5-amino-1-(5-phospho-D-ribosyl)imidazole from N(2)-formyl-N(1)-(5-phospho-D-ribosyl)glycinamide: step 1/2. In terms of biological role, part of the phosphoribosylformylglycinamidine synthase complex involved in the purines biosynthetic pathway. Catalyzes the ATP-dependent conversion of formylglycinamide ribonucleotide (FGAR) and glutamine to yield formylglycinamidine ribonucleotide (FGAM) and glutamate. The FGAM synthase complex is composed of three subunits. PurQ produces an ammonia molecule by converting glutamine to glutamate. PurL transfers the ammonia molecule to FGAR to form FGAM in an ATP-dependent manner. PurS interacts with PurQ and PurL and is thought to assist in the transfer of the ammonia molecule from PurQ to PurL. The protein is Phosphoribosylformylglycinamidine synthase subunit PurQ of Staphylococcus aureus (strain USA300).